The primary structure comprises 446 residues: Glycine--tRNA ligase (446 aa).

Arginine 100 and glutamate 158 together coordinate substrate. ATP contacts are provided by residues 190–192 (RNE), 200–205 (FRTREF), 275–276 (EL), and 319–322 (GIER). 205-209 (FEQFE) is a substrate binding site. Residue 315–319 (EPAVG) coordinates substrate.

The protein belongs to the class-II aminoacyl-tRNA synthetase family. As to quaternary structure, homodimer.

The protein resides in the cytoplasm. The catalysed reaction is tRNA(Gly) + glycine + ATP = glycyl-tRNA(Gly) + AMP + diphosphate. In terms of biological role, catalyzes the attachment of glycine to tRNA(Gly). This is Glycine--tRNA ligase from Mycoplasma genitalium (strain ATCC 33530 / DSM 19775 / NCTC 10195 / G37) (Mycoplasmoides genitalium).